A 557-amino-acid chain; its full sequence is MSGASEVPSFRWTQSLRRGLSHFTTSAKGDVLRDAKSLVDGLDFNQVSQVQRVMRKDKRSDDDLSKLRDLNRSVDSLMVMKNKQNNVSLKIGSLSKDELMDLATDLEKLKRKINLGDRQGPGVYQGNLTSAQLEKRSEILKSLGFQPRANQNGVVKVWDIKNPKLLINQFGSIPALTIACMSVQGAEQMNDVVQGLTSLGLLYTVKYPNLDDLDKLSKDHPCLEFITKEESANNISGYNLSLSAAVKAGACLVDGGNMLETILVKPDNFQDIVKSLLVVKRQEKMFVNEKPGLRNPYENILYKLCLSGEGWPYIGSRSQIVGRAWENTTVDLSKEVVYGPSAPVKNGGNMRLSPLSDTQEAVIKEAIGKLDMDETIWIDIEGPPNDPVELAIYQPSTGNYIHCFRVPHDEKGFKNGSKYSHGILLRDIENARSGLLSRILMRLPQKVVFTCQGSDDIQKLLQMNGRPDIATIDMSFSSEQARFFEGVVWEKFGHLCTRHNGVVLSRKKKGGNSGEPHCALLDCIIFQAAFEGQVTGQIPKPLLPNSLIFKDEPRVAM.

The segment at 54 to 235 (MRKDKRSDDD…ITKEESANNI (182 aa)) is binding site for the cap structure m7GTP. Residues Asp-379 and Glu-381 each contribute to the Mn(2+) site. 4 residues coordinate Zn(2+): Glu-389, Cys-496, His-499, and Cys-518. Asp-522 provides a ligand contact to Mn(2+).

The protein belongs to the arenaviridae nucleocapsid protein family. As to quaternary structure, homomultimerizes to form the nucleocapsid. Binds to viral genomic RNA. Interacts with glycoprotein G2. Interacts with protein Z; this interaction probably directs the encapsidated genome to budding sites. Interacts with protein L; this interaction does not interfere with Z-L interaction. Interacts with host IKBKE (via Protein kinase domain); the interaction inhibits IKBKE kinase activity.

The protein localises to the virion. Its subcellular location is the host cytoplasm. Encapsidates the genome, protecting it from nucleases. The encapsidated genomic RNA is termed the nucleocapsid (NC). Serves as template for viral transcription and replication. The increased presence of protein N in host cell does not seem to trigger the switch from transcription to replication as observed in other negative strain RNA viruses. Through the interaction with host IKBKE, strongly inhibits the phosphorylation and nuclear translocation of host IRF3, a protein involved in interferon activation pathway, leading to the inhibition of interferon-beta and IRF3-dependent promoters activation. Also encodes a functional 3'-5' exoribonuclease that degrades preferentially dsRNA substrates and thereby participates in the suppression of interferon induction. The sequence is that of Nucleoprotein from Calomys callosus (Large vesper mouse).